Here is a 407-residue protein sequence, read N- to C-terminus: Sensor histidine kinase YdfH (407 aa).

Residues 1–25 (MLIRNPFKDKYYSHDRRALNMLALR) are Cytoplasmic-facing. 2 consecutive transmembrane segments (helical) span residues 26–46 (VPGL…QFVS) and 47–67 (GGWS…FALL). The Cytoplasmic portion of the chain corresponds to 68-78 (HWHSYRWVKKR). Transmembrane regions (helical) follow at residues 79-99 (VILY…LMTG) and 100-120 (FFIL…IGMA). The Cytoplasmic segment spans residues 121-125 (DRRRT). A helical membrane pass occupies residues 126–146 (FLILYLLLLLVINSAYHLHKG). The Extracellular portion of the chain corresponds to 147-150 (EVLH). Residues 151-171 (FIVIAAPIMIVIITYAATFFA) traverse the membrane as a helical segment. The Cytoplasmic segment spans residues 172–407 (QVDEKIKAQL…VPIQGEMQDE (236 aa)). The Histidine kinase domain maps to 201–402 (ERQRMARDLH…QIEITVPIQG (202 aa)). The residue at position 210 (histidine 210) is a Phosphohistidine; by autocatalysis.

The protein resides in the cell membrane. It carries out the reaction ATP + protein L-histidine = ADP + protein N-phospho-L-histidine.. Functionally, member of the two-component regulatory system YdfH/YdfI. May activate YdfI by phosphorylation. In Bacillus subtilis (strain 168), this protein is Sensor histidine kinase YdfH (ydfH).